A 728-amino-acid chain; its full sequence is Leucine-rich repeat and calponin homology domain-containing protein 1 (728 aa).

Over residues 24–36 the composition is skewed to basic residues; it reads HHPHHHHHHHQHH. Residues 24-57 are disordered; the sequence is HHPHHHHHHHQHHGGTGAPGGAGGGGGGSGGFNL. Positions 37–54 are enriched in gly residues; that stretch reads GGTGAPGGAGGGGGGSGG. LRR repeat units lie at residues 98–119, 121–143, 144–166, 167–187, 189–210, 212–234, 235–255, 257–278, and 283–304; these read DTVQ…LCHF, SLEI…VNLQ, MLTY…CGLP, LKVL…IGQL, QLME…IGQL, SLRE…VDLS, LVKF…FREM, QLQV…ICTK, and IFKY…YLHT. Residues 311–322 are compositionally biased toward basic and acidic residues; the sequence is HQHVEDGKKDSD. The interval 311–348 is disordered; sequence HQHVEDGKKDSDSGVGSDNGDKRLSATEPSDEDTVSLN. Position 370 is a phosphoserine (serine 370). The tract at residues 377-398 is disordered; the sequence is HQEFQPEPSLLGDSTNSGEERD. The residue at position 409 (serine 409) is a Phosphoserine. Polar residues predominate over residues 516 to 525; that stretch reads LQSNGSQYSP. The tract at residues 516–547 is disordered; the sequence is LQSNGSQYSPNEIRENSPAVSPTTNSTAPFGL. Residues serine 532 and serine 536 each carry the phosphoserine modification. Positions 533-543 are enriched in polar residues; it reads PAVSPTTNSTA. Threonine 568 carries the phosphothreonine modification. Residues 576-692 form the Calponin-homology (CH) domain; it reads MREEKELVEQ…TLLALGEKAP (117 aa).

In terms of assembly, interacts (via LRR repeats) with unphosphorylated DOCK8 (via DHR-2 domain); the interaction prevents the interaction between DOCK8 and CDC42.

It is found in the cytoplasm. Functionally, acts as a negative regulator of GTPase CDC42 by sequestering CDC42-guanine exchange factor DOCK8. Probably by preventing CDC42 activation, negatively regulates CD4(+) T-cell migration. The sequence is that of Leucine-rich repeat and calponin homology domain-containing protein 1 (LRCH1) from Homo sapiens (Human).